Here is a 613-residue protein sequence, read N- to C-terminus: V-type proton ATPase catalytic subunit A isoform 1 (613 aa).

240 to 247 (GAFGCGKT) is a binding site for ATP.

This sequence belongs to the ATPase alpha/beta chains family. V-ATPase is a heteromultimeric enzyme composed of a peripheral catalytic V1 complex (main components: subunits A, B, C, D, E, and F) attached to an integral membrane V0 proton pore complex (main component: the proteolipid protein).

The catalysed reaction is ATP + H2O + 4 H(+)(in) = ADP + phosphate + 5 H(+)(out). Catalytic subunit of the peripheral V1 complex of vacuolar ATPase. V-ATPase vacuolar ATPase is responsible for acidifying a variety of intracellular compartments in eukaryotic cells. This Acetabularia acetabulum (Mermaid's wine glass) protein is V-type proton ATPase catalytic subunit A isoform 1.